A 661-amino-acid chain; its full sequence is tRNA uridine 5-carboxymethylaminomethyl modification enzyme MnmG (661 aa).

13-18 (GGGHAG) is a binding site for FAD. Position 285–299 (285–299 (GPRYCPSVEDKINRF)) interacts with NAD(+).

Belongs to the MnmG family. In terms of assembly, homodimer. Heterotetramer of two MnmE and two MnmG subunits. FAD is required as a cofactor.

It localises to the cytoplasm. In terms of biological role, NAD-binding protein involved in the addition of a carboxymethylaminomethyl (cmnm) group at the wobble position (U34) of certain tRNAs, forming tRNA-cmnm(5)s(2)U34. The protein is tRNA uridine 5-carboxymethylaminomethyl modification enzyme MnmG of Acidovorax sp. (strain JS42).